The following is a 194-amino-acid chain: Large ribosomal subunit protein bL9 (194 aa).

A disordered region spans residues 165–194; it reads PEDAEEAVANEEEAEAALLDDEDADEYEQG. The segment covering 166–194 has biased composition (acidic residues); that stretch reads EDAEEAVANEEEAEAALLDDEDADEYEQG.

This sequence belongs to the bacterial ribosomal protein bL9 family.

Its function is as follows. Binds to the 23S rRNA. This is Large ribosomal subunit protein bL9 from Rhodospirillum rubrum (strain ATCC 11170 / ATH 1.1.1 / DSM 467 / LMG 4362 / NCIMB 8255 / S1).